The chain runs to 309 residues: F-box/LRR-repeat protein At3g48880 (309 aa).

Residues 10-57 enclose the F-box domain; the sequence is LRRWEELDTDILVRIFQKFSVFELTSGLAHVCRGWRAACCDPILWKTV. LRR repeat units follow at residues 77–107, 108–133, 159–184, and 208–233; these read VERR…IFHF, NLFL…VLPA, SIAN…KIMG, and CSAI…NISH.

The sequence is that of F-box/LRR-repeat protein At3g48880 from Arabidopsis thaliana (Mouse-ear cress).